Consider the following 181-residue polypeptide: Peptidyl-prolyl cis-trans isomerase H (181 aa).

Residues 17–180 (FFDITLGGES…QDVTIIQCGE (164 aa)) form the PPIase cyclophilin-type domain.

The protein belongs to the cyclophilin-type PPIase family. PPIase H subfamily.

The protein localises to the nucleus. The catalysed reaction is [protein]-peptidylproline (omega=180) = [protein]-peptidylproline (omega=0). Functionally, PPIases accelerate the folding of proteins. It catalyzes the cis-trans isomerization of proline imidic peptide bonds in oligopeptides. The chain is Peptidyl-prolyl cis-trans isomerase H (cyp3) from Aspergillus oryzae (strain ATCC 42149 / RIB 40) (Yellow koji mold).